A 218-amino-acid polypeptide reads, in one-letter code: Ribonuclease HII (218 aa).

The RNase H type-2 domain occupies 24–218 (ESIAGVDEVG…KLFAVNGSLT (195 aa)). A divalent metal cation is bound by residues aspartate 30, glutamate 31, and aspartate 126.

It belongs to the RNase HII family. Mn(2+) is required as a cofactor. Requires Mg(2+) as cofactor.

The protein resides in the cytoplasm. The catalysed reaction is Endonucleolytic cleavage to 5'-phosphomonoester.. Functionally, endonuclease that specifically degrades the RNA of RNA-DNA hybrids. The chain is Ribonuclease HII from Prochlorococcus marinus (strain MIT 9313).